Here is a 20-residue protein sequence, read N- to C-terminus: Peptide encoded by miPEP171b (20 aa).

In terms of tissue distribution, lateral root initiations.

In terms of biological role, regulatory peptide encoded by the primary transcript (pri-miR171b) of the microRNA miR171b that enhances the accumulation of its corresponding mature miRNA. Acts probably as a transcriptional activator of its corresponding pri-miRNA. Has no effect on the accumulation of other miRNAs. Addition of synthetic miPEP171b increases the abundance of miR171b, with consequent reduction of lateral root formation. The chain is Peptide encoded by miPEP171b from Medicago truncatula (Barrel medic).